The chain runs to 119 residues: Hemerythrin subunit A (119 aa).

Residues H26, H55, E59, H74, H78, H107, and D112 each coordinate Fe cation.

The protein belongs to the hemerythrin family.

Hemerythrin is a respiratory protein in blood cells of certain marine worms. The oxygen-binding site in each chain contains two iron atoms. This chain is Hemerythrin subunit A, found in Sipunculus nudus (Sipunculan worm).